Reading from the N-terminus, the 93-residue chain is Small ribosomal subunit protein uS19 (93 aa).

The protein belongs to the universal ribosomal protein uS19 family.

Its function is as follows. Protein S19 forms a complex with S13 that binds strongly to the 16S ribosomal RNA. The sequence is that of Small ribosomal subunit protein uS19 from Campylobacter jejuni subsp. jejuni serotype O:6 (strain 81116 / NCTC 11828).